The following is a 485-amino-acid chain: uncharacterized protein (485 aa).

The first 23 residues, 1 to 23, serve as a signal peptide directing secretion; sequence MRRRVCTVVRAVVCLLSTSLLTT. Cys-24 carries N-palmitoyl cysteine lipidation. Cys-24 carries S-diacylglycerol cysteine lipidation. Positions 308-327 are enriched in low complexity; sequence SAASSPAQCPSSPSSSSSSS. Positions 308–331 are disordered; it reads SAASSPAQCPSSPSSSSSSSTNAG.

The protein belongs to the TP013X lipoprotein family.

It localises to the cell membrane. This is an uncharacterized protein from Treponema pallidum (strain Nichols).